The sequence spans 481 residues: Glycogen synthase (481 aa).

Lysine 16 serves as a coordination point for ADP-alpha-D-glucose.

The protein belongs to the glycosyltransferase 1 family. Bacterial/plant glycogen synthase subfamily.

It catalyses the reaction [(1-&gt;4)-alpha-D-glucosyl](n) + ADP-alpha-D-glucose = [(1-&gt;4)-alpha-D-glucosyl](n+1) + ADP + H(+). Its pathway is glycan biosynthesis; glycogen biosynthesis. Synthesizes alpha-1,4-glucan chains using ADP-glucose. The chain is Glycogen synthase from Lacticaseibacillus casei (strain BL23) (Lactobacillus casei).